A 267-amino-acid polypeptide reads, in one-letter code: 4-hydroxy-tetrahydrodipicolinate reductase (267 aa).

Residues 8–13 and Asp34 contribute to the NAD(+) site; that span reads GAAGRM. Arg35 serves as a coordination point for NADP(+). NAD(+) contacts are provided by residues 98–100 and 122–125; these read GTT and AANF. Catalysis depends on His155, which acts as the Proton donor/acceptor. Residue His156 participates in (S)-2,3,4,5-tetrahydrodipicolinate binding. Lys159 (proton donor) is an active-site residue. 165–166 is a binding site for (S)-2,3,4,5-tetrahydrodipicolinate; it reads GT.

The protein belongs to the DapB family.

It localises to the cytoplasm. It carries out the reaction (S)-2,3,4,5-tetrahydrodipicolinate + NAD(+) + H2O = (2S,4S)-4-hydroxy-2,3,4,5-tetrahydrodipicolinate + NADH + H(+). The catalysed reaction is (S)-2,3,4,5-tetrahydrodipicolinate + NADP(+) + H2O = (2S,4S)-4-hydroxy-2,3,4,5-tetrahydrodipicolinate + NADPH + H(+). The protein operates within amino-acid biosynthesis; L-lysine biosynthesis via DAP pathway; (S)-tetrahydrodipicolinate from L-aspartate: step 4/4. Its function is as follows. Catalyzes the conversion of 4-hydroxy-tetrahydrodipicolinate (HTPA) to tetrahydrodipicolinate. This is 4-hydroxy-tetrahydrodipicolinate reductase from Pseudomonas putida (strain ATCC 700007 / DSM 6899 / JCM 31910 / BCRC 17059 / LMG 24140 / F1).